A 548-amino-acid polypeptide reads, in one-letter code: Chaperonin GroEL (548 aa).

ATP is bound by residues 30–33 (TLGP), Lys51, 87–91 (DGTTT), Gly415, 479–481 (NAA), and Asp495.

Belongs to the chaperonin (HSP60) family. In terms of assembly, forms a cylinder of 14 subunits composed of two heptameric rings stacked back-to-back. Interacts with the co-chaperonin GroES.

The protein resides in the cytoplasm. The enzyme catalyses ATP + H2O + a folded polypeptide = ADP + phosphate + an unfolded polypeptide.. Together with its co-chaperonin GroES, plays an essential role in assisting protein folding. The GroEL-GroES system forms a nano-cage that allows encapsulation of the non-native substrate proteins and provides a physical environment optimized to promote and accelerate protein folding. The polypeptide is Chaperonin GroEL (Pseudomonas fluorescens (strain SBW25)).